The sequence spans 407 residues: 4-hydroxybenzoate polyprenyltransferase, mitochondrial (407 aa).

The transit peptide at M1–V20 directs the protein to the mitochondrion. 6 consecutive transmembrane segments (helical) span residues I137–G157, F162–I182, F210–L230, F254–W274, G279–V299, and L330–A350.

It belongs to the UbiA prenyltransferase family. The cofactor is Mg(2+). Expressed in flowers.

The protein localises to the mitochondrion inner membrane. The catalysed reaction is an all-trans-polyprenyl diphosphate + 4-hydroxybenzoate = a 4-hydroxy-3-(all-trans-polyprenyl)benzoate + diphosphate. Its pathway is cofactor biosynthesis; ubiquinone biosynthesis. Functionally, catalyzes the prenylation of para-hydroxybenzoate (PHB) with an all-trans polyprenyl group. Mediates the second step in the final reaction sequence of coenzyme Q (CoQ) biosynthesis, which is the condensation of the polyisoprenoid side chain with PHB, generating the first membrane-bound Q intermediate. Required for embryo development. This chain is 4-hydroxybenzoate polyprenyltransferase, mitochondrial, found in Arabidopsis thaliana (Mouse-ear cress).